A 484-amino-acid polypeptide reads, in one-letter code: Mitogen-activated protein kinase SLT2/MPK1 (484 aa).

The Protein kinase domain maps to 23–318 (FQLIKEIGHG…VDEALEHPYL (296 aa)). ATP contacts are provided by residues 29-37 (IGHGAYGIV) and Lys-54. The active-site Proton acceptor is the Asp-153. A Phosphothreonine modification is found at Thr-190. Positions 190 to 192 (TEY) match the TXY motif. Residue Tyr-192 is modified to Phosphotyrosine. Over residues 383–392 (QQQQQQQQQP) the composition is skewed to low complexity. 2 disordered regions span residues 383–403 (QQQQ…AAAS) and 426–464 (IHSQ…PQND).

Belongs to the protein kinase superfamily. CMGC Ser/Thr protein kinase family. MAP kinase subfamily. Interacts with RLM1. Mg(2+) is required as a cofactor. In terms of processing, dually phosphorylated on Thr-190 and Tyr-192, which activates the enzyme.

The enzyme catalyses L-seryl-[protein] + ATP = O-phospho-L-seryl-[protein] + ADP + H(+). The catalysed reaction is L-threonyl-[protein] + ATP = O-phospho-L-threonyl-[protein] + ADP + H(+). Its activity is regulated as follows. Activated by tyrosine and threonine phosphorylation by MKK1 and MKK2. Its function is as follows. Serine/threonine protein kinase involved in a signal transduction pathway that plays a role in yeast cell morphogenesis and cell growth. This pathway seems to start by SMP3; then involve the kinase PKC1 that may act the BCK1 kinase that then phosphorylates MKK1 and MKK2 which themselves phosphorylate the SLT2/MPK1 kinase which itself then phosphorylates and activates the transcription factor RLM1. Directly phosphorylates BCY1 upon TOR complex 1 (TORC1) inhibition. This Saccharomyces cerevisiae (strain ATCC 204508 / S288c) (Baker's yeast) protein is Mitogen-activated protein kinase SLT2/MPK1 (SLT2).